We begin with the raw amino-acid sequence, 252 residues long: Trans-aconitate 2-methyltransferase (252 aa).

This sequence belongs to the methyltransferase superfamily. Tam family.

The protein localises to the cytoplasm. The catalysed reaction is trans-aconitate + S-adenosyl-L-methionine = (E)-3-(methoxycarbonyl)pent-2-enedioate + S-adenosyl-L-homocysteine. Its function is as follows. Catalyzes the S-adenosylmethionine monomethyl esterification of trans-aconitate. The chain is Trans-aconitate 2-methyltransferase from Escherichia coli O1:K1 / APEC.